The primary structure comprises 957 residues: Glycine dehydrogenase (decarboxylating) (957 aa).

Lys708 carries the post-translational modification N6-(pyridoxal phosphate)lysine.

This sequence belongs to the GcvP family. As to quaternary structure, the glycine cleavage system is composed of four proteins: P, T, L and H. Requires pyridoxal 5'-phosphate as cofactor.

The enzyme catalyses N(6)-[(R)-lipoyl]-L-lysyl-[glycine-cleavage complex H protein] + glycine + H(+) = N(6)-[(R)-S(8)-aminomethyldihydrolipoyl]-L-lysyl-[glycine-cleavage complex H protein] + CO2. In terms of biological role, the glycine cleavage system catalyzes the degradation of glycine. The P protein binds the alpha-amino group of glycine through its pyridoxal phosphate cofactor; CO(2) is released and the remaining methylamine moiety is then transferred to the lipoamide cofactor of the H protein. The sequence is that of Glycine dehydrogenase (decarboxylating) from Shigella dysenteriae serotype 1 (strain Sd197).